The following is a 102-amino-acid chain: MSSSGYPPNQGAFSTEQSHYPPHSVKYTFPSTHHQQDPAFGGKHEAPSSPILGQPCGDDQNASPSKLSKEELIECMDRVDREIAKVEQQILKLKKKQVKVFV.

The span at 1–18 (MSSSGYPPNQGAFSTEQS) shows a compositional bias: polar residues. The segment at 1–68 (MSSSGYPPNQ…DQNASPSKLS (68 aa)) is disordered. The stretch at 68 to 100 (SKEELIECMDRVDREIAKVEQQILKLKKKQVKV) forms a coiled coil.

Belongs to the N-CoR nuclear receptor corepressors family.

The chain is Putative nuclear receptor corepressor 1-like protein NCOR1P1 (NCOR1P1) from Homo sapiens (Human).